Reading from the N-terminus, the 819-residue chain is DNA topoisomerase 4 subunit A (819 aa).

The region spanning 30–496 (LPDIRDGLKP…QIIEIDTASL (467 aa)) is the Topo IIA-type catalytic domain. Residue Tyr-118 is the O-(5'-phospho-DNA)-tyrosine intermediate of the active site.

This sequence belongs to the type II topoisomerase GyrA/ParC subunit family. ParC type 2 subfamily. As to quaternary structure, heterotetramer composed of ParC and ParE.

The protein resides in the cell membrane. The catalysed reaction is ATP-dependent breakage, passage and rejoining of double-stranded DNA.. Topoisomerase IV is essential for chromosome segregation. It relaxes supercoiled DNA. Performs the decatenation events required during the replication of a circular DNA molecule. The protein is DNA topoisomerase 4 subunit A of Streptococcus pyogenes serotype M3 (strain ATCC BAA-595 / MGAS315).